The chain runs to 133 residues: Helix-loop-helix protein 1 (133 aa).

Positions 1-79 (MMLNSDTMEL…RRATAKYRTA (79 aa)) are disordered. Residues 25-45 (DCGGGAGPDGAGPGGPGGGQA) are compositionally biased toward gly residues. Positions 52–65 (EPGRKDLQHLSREE) are enriched in basic and acidic residues. Over residues 66–79 (RRRRRRATAKYRTA) the composition is skewed to basic residues. The region spanning 75 to 127 (KYRTAHATRERIRVEAFNLAFAELRKLLPTLPPDKKLSKIEILRLAICYISYL) is the bHLH domain.

As to quaternary structure, efficient DNA binding requires dimerization with another bHLH protein.

The protein localises to the nucleus. Its function is as follows. May serve as DNA-binding protein and may be involved in the control of cell-type determination, possibly within the developing nervous system. The protein is Helix-loop-helix protein 1 (NHLH1) of Homo sapiens (Human).